A 687-amino-acid chain; its full sequence is Glycine--tRNA ligase beta subunit (687 aa).

The protein belongs to the class-II aminoacyl-tRNA synthetase family. In terms of assembly, tetramer of two alpha and two beta subunits.

Its subcellular location is the cytoplasm. The catalysed reaction is tRNA(Gly) + glycine + ATP = glycyl-tRNA(Gly) + AMP + diphosphate. This Geotalea daltonii (strain DSM 22248 / JCM 15807 / FRC-32) (Geobacter daltonii) protein is Glycine--tRNA ligase beta subunit.